Consider the following 277-residue polypeptide: Tryptophan synthase alpha chain (277 aa).

Catalysis depends on proton acceptor residues E42 and E53.

The protein belongs to the TrpA family. As to quaternary structure, tetramer of two alpha and two beta chains.

It carries out the reaction (1S,2R)-1-C-(indol-3-yl)glycerol 3-phosphate + L-serine = D-glyceraldehyde 3-phosphate + L-tryptophan + H2O. The protein operates within amino-acid biosynthesis; L-tryptophan biosynthesis; L-tryptophan from chorismate: step 5/5. The alpha subunit is responsible for the aldol cleavage of indoleglycerol phosphate to indole and glyceraldehyde 3-phosphate. This is Tryptophan synthase alpha chain from Natronomonas pharaonis (strain ATCC 35678 / DSM 2160 / CIP 103997 / JCM 8858 / NBRC 14720 / NCIMB 2260 / Gabara) (Halobacterium pharaonis).